We begin with the raw amino-acid sequence, 142 residues long: Hemoglobin subunit alpha-1 (142 aa).

Residues 2-142 enclose the Globin domain; that stretch reads VLSADDKSNV…VSTVLTSKYR (141 aa). His59 is an O2 binding site. His88 is a binding site for heme b.

Belongs to the globin family. Heterotetramer of two alpha chains and two beta chains. In terms of tissue distribution, red blood cells.

Involved in oxygen transport from the lung to the various peripheral tissues. Functionally, hemopressin acts as an antagonist peptide of the cannabinoid receptor CNR1. Hemopressin-binding efficiently blocks cannabinoid receptor CNR1 and subsequent signaling. The sequence is that of Hemoglobin subunit alpha-1 (HBA1) from Equus quagga burchellii (Burchell's zebra).